The sequence spans 372 residues: Cyclin-J (372 aa).

Positions aspartate 15–cysteine 143 constitute a Cyclin N-terminal domain.

This sequence belongs to the cyclin family.

This chain is Cyclin-J (CCNJ), found in Homo sapiens (Human).